The chain runs to 242 residues: ATP synthase subunit a (242 aa).

6 consecutive transmembrane segments (helical) span residues 29–49, 84–104, 114–134, 140–160, 189–209, and 210–230; these read SSIY…LAFY, FIPL…LGMT, IIVT…VGFV, FLTL…MIVI, VIAG…IPLM, and MILI…FTIL.

The protein belongs to the ATPase A chain family. F-type ATPases have 2 components, CF(1) - the catalytic core - and CF(0) - the membrane proton channel. CF(1) has five subunits: alpha(3), beta(3), gamma(1), delta(1), epsilon(1). CF(0) has three main subunits: a(1), b(2) and c(9-12). The alpha and beta chains form an alternating ring which encloses part of the gamma chain. CF(1) is attached to CF(0) by a central stalk formed by the gamma and epsilon chains, while a peripheral stalk is formed by the delta and b chains.

Its subcellular location is the cell inner membrane. Its function is as follows. Key component of the proton channel; it plays a direct role in the translocation of protons across the membrane. The sequence is that of ATP synthase subunit a from Rickettsia massiliae (strain Mtu5).